Reading from the N-terminus, the 1368-residue chain is DNA-directed RNA polymerase subunit beta (1368 aa).

This sequence belongs to the RNA polymerase beta chain family. In terms of assembly, the RNAP catalytic core consists of 2 alpha, 1 beta, 1 beta' and 1 omega subunit. When a sigma factor is associated with the core the holoenzyme is formed, which can initiate transcription.

It catalyses the reaction RNA(n) + a ribonucleoside 5'-triphosphate = RNA(n+1) + diphosphate. DNA-dependent RNA polymerase catalyzes the transcription of DNA into RNA using the four ribonucleoside triphosphates as substrates. The sequence is that of DNA-directed RNA polymerase subunit beta from Legionella pneumophila (strain Lens).